Consider the following 329-residue polypeptide: Phospho-N-acetylmuramoyl-pentapeptide-transferase (329 aa).

A run of 9 helical transmembrane segments spans residues 1-21, 53-73, 76-96, 109-129, 141-161, 175-195, 198-218, 237-257, and 309-329; these read MLLNGIVAAVITMIITIIGIP, MGGFVFVVVSLVVSLVAALVF, FSPAFITAWWVFAMYAVIGFL, GLTAKQKMLAQILIGIVSYFI, ILSWQVNIGIFFSIFIIIWLV, GLASITVAISLTAYAVIAVVH, YDVLLIILSVIGGLLGFFVFN, FLAIVSILLHAEWTLLLIGAV, and IVFWLFTAVLSVIALCIYFAF.

This sequence belongs to the glycosyltransferase 4 family. MraY subfamily. It depends on Mg(2+) as a cofactor.

Its subcellular location is the cell membrane. The catalysed reaction is UDP-N-acetyl-alpha-D-muramoyl-L-alanyl-gamma-D-glutamyl-L-lysyl-D-alanyl-D-alanine + di-trans,octa-cis-undecaprenyl phosphate = Mur2Ac(oyl-L-Ala-gamma-D-Glu-L-Lys-D-Ala-D-Ala)-di-trans,octa-cis-undecaprenyl diphosphate + UMP. It functions in the pathway cell wall biogenesis; peptidoglycan biosynthesis. In terms of biological role, catalyzes the initial step of the lipid cycle reactions in the biosynthesis of the cell wall peptidoglycan: transfers peptidoglycan precursor phospho-MurNAc-pentapeptide from UDP-MurNAc-pentapeptide onto the lipid carrier undecaprenyl phosphate, yielding undecaprenyl-pyrophosphoryl-MurNAc-pentapeptide, known as lipid I. This Lactococcus lactis subsp. cremoris (strain MG1363) protein is Phospho-N-acetylmuramoyl-pentapeptide-transferase.